We begin with the raw amino-acid sequence, 125 residues long: Fluoride-specific ion channel FluC (125 aa).

The next 3 helical transmembrane spans lie at 36-56 (GTIF…FLSI), 65-85 (FILF…TFAY), and 99-119 (IIYF…GMFL). Positions 75 and 78 each coordinate Na(+).

Belongs to the fluoride channel Fluc/FEX (TC 1.A.43) family.

The protein resides in the cell inner membrane. It catalyses the reaction fluoride(in) = fluoride(out). With respect to regulation, na(+) is not transported, but it plays an essential structural role and its presence is essential for fluoride channel function. In terms of biological role, fluoride-specific ion channel. Important for reducing fluoride concentration in the cell, thus reducing its toxicity. The chain is Fluoride-specific ion channel FluC from Thermosipho africanus (strain TCF52B).